The primary structure comprises 276 residues: NAD-capped RNA hydrolase NudC (276 aa).

Arg82 contacts substrate. Zn(2+) is bound by residues Cys112 and Cys115. Substrate is bound at residue Glu125. Zn(2+) is bound by residues Cys130 and Cys133. Tyr138 lines the substrate pocket. The Nudix hydrolase domain occupies 139–262 (PRISPSMIVL…SIARYLIDLY (124 aa)). Residues Ala172, Glu188, and Glu192 each coordinate a divalent metal cation. The short motif at 173-194 (GFAEPGESAEECLVREVREEVA) is the Nudix box element. Position 206–213 (206–213 (QCWPFPHS)) interacts with substrate. Residue Glu233 participates in a divalent metal cation binding. Ala255 provides a ligand contact to substrate.

The protein belongs to the Nudix hydrolase family. NudC subfamily. As to quaternary structure, homodimer. Mg(2+) is required as a cofactor. The cofactor is Mn(2+). It depends on Zn(2+) as a cofactor.

The enzyme catalyses a 5'-end NAD(+)-phospho-ribonucleoside in mRNA + H2O = a 5'-end phospho-adenosine-phospho-ribonucleoside in mRNA + beta-nicotinamide D-ribonucleotide + 2 H(+). The catalysed reaction is NAD(+) + H2O = beta-nicotinamide D-ribonucleotide + AMP + 2 H(+). It carries out the reaction NADH + H2O = reduced beta-nicotinamide D-ribonucleotide + AMP + 2 H(+). In terms of biological role, mRNA decapping enzyme that specifically removes the nicotinamide adenine dinucleotide (NAD) cap from a subset of mRNAs by hydrolyzing the diphosphate linkage to produce nicotinamide mononucleotide (NMN) and 5' monophosphate mRNA. The NAD-cap is present at the 5'-end of some mRNAs and stabilizes RNA against 5'-processing. Has preference for mRNAs with a 5'-end purine. Catalyzes the hydrolysis of a broad range of dinucleotide pyrophosphates. This Pseudomonas entomophila (strain L48) protein is NAD-capped RNA hydrolase NudC.